Reading from the N-terminus, the 651-residue chain is MRCLTKTRSFHYVIIFYSFFFLPFLSSSSDDQRTTVSGLFCGGRSKSSADPNYIPTFVEDMHSLSLKLTTRRFATESLNSTTSIYALIQCHDDLSPSDCQLCYAIARTRIPRCLPSSSARIFLDGCFLRYETYEFYDESVSDASDSFSCSNDTVLDPRFGFQVSETAARVAVRKGGFGVAGENGVHALAQCWESLGKEDCRVCLEKAVKEVKRCVSRREGRAMNTGCYLRYSDHKFYNGDGHHKFHVLFNKGVIVAIVLTTSAFVMLILLATYVIMTKVSKTKQEKRNLGLVSRKFNNSKTKFKYETLEKATDYFSHKKMLGQGGNGTVFLGILPNGKNVAVKRLVFNTRDWVEEFFNEVNLISGIQHKNLVKLLGCSIEGPESLLVYEYVPNKSLDQFLFDESQSKVLNWSQRLNIILGTAEGLAYLHGGSPVRIIHRDIKTSNVLLDDQLNPKIADFGLARCFGLDKTHLSTGIAGTLGYMAPEYVVRGQLTEKADVYSFGVLVLEIACGTRINAFVPETGHLLQRVWNLYTLNRLVEALDPCLKDEFLQVQGSEAEACKVLRVGLLCTQASPSLRPSMEEVIRMLTERDYPIPSPTSPPFLRVSSLTTDLEGSSTISHSTNSTTTFNTMVKTDQASYTSSESSTTRTI.

Residues 1–28 (MRCLTKTRSFHYVIIFYSFFFLPFLSSS) form the signal peptide. Topologically, residues 29–251 (SDDQRTTVSG…HHKFHVLFNK (223 aa)) are extracellular. Gnk2-homologous domains are found at residues 35-135 (TVSG…TYEF) and 137-236 (DESV…DHKF). Asparagine 79 and asparagine 151 each carry an N-linked (GlcNAc...) asparagine glycan. A helical transmembrane segment spans residues 252–272 (GVIVAIVLTTSAFVMLILLAT). At 273–651 (YVIMTKVSKT…SSESSTTRTI (379 aa)) the chain is on the cytoplasmic side. One can recognise a Protein kinase domain in the interval 315–604 (FSHKKMLGQG…IPSPTSPPFL (290 aa)). Residues 321–329 (LGQGGNGTV) and lysine 343 each bind ATP. Tyrosine 388 bears the Phosphotyrosine mark. Aspartate 440 serves as the catalytic Proton acceptor. Serine 444 and serine 473 each carry phosphoserine. Threonine 474 and threonine 479 each carry phosphothreonine. Tyrosine 487 is subject to Phosphotyrosine.

The protein belongs to the protein kinase superfamily. Ser/Thr protein kinase family. CRK subfamily.

The protein resides in the membrane. The enzyme catalyses L-seryl-[protein] + ATP = O-phospho-L-seryl-[protein] + ADP + H(+). It carries out the reaction L-threonyl-[protein] + ATP = O-phospho-L-threonyl-[protein] + ADP + H(+). In Arabidopsis thaliana (Mouse-ear cress), this protein is Cysteine-rich receptor-like protein kinase 42 (CRK42).